Consider the following 294-residue polypeptide: Ribosomal protein L11 methyltransferase (294 aa).

S-adenosyl-L-methionine-binding residues include T145, G166, D188, and N227.

The protein belongs to the methyltransferase superfamily. PrmA family.

It is found in the cytoplasm. The catalysed reaction is L-lysyl-[protein] + 3 S-adenosyl-L-methionine = N(6),N(6),N(6)-trimethyl-L-lysyl-[protein] + 3 S-adenosyl-L-homocysteine + 3 H(+). In terms of biological role, methylates ribosomal protein L11. This is Ribosomal protein L11 methyltransferase from Hydrogenovibrio crunogenus (strain DSM 25203 / XCL-2) (Thiomicrospira crunogena).